Here is a 590-residue protein sequence, read N- to C-terminus: Aspartate--tRNA(Asp/Asn) ligase (590 aa).

An L-aspartate-binding site is contributed by Glu172. The interval 196-199 (QLFK) is aspartate. Position 218 (Arg218) interacts with L-aspartate. ATP-binding positions include 218–220 (RDE) and Gln227. Position 449 (His449) interacts with L-aspartate. Position 484 (Glu484) interacts with ATP. Arg491 serves as a coordination point for L-aspartate. 536–539 (GVDR) serves as a coordination point for ATP.

The protein belongs to the class-II aminoacyl-tRNA synthetase family. Type 1 subfamily. In terms of assembly, homodimer.

The protein localises to the cytoplasm. The catalysed reaction is tRNA(Asx) + L-aspartate + ATP = L-aspartyl-tRNA(Asx) + AMP + diphosphate. Aspartyl-tRNA synthetase with relaxed tRNA specificity since it is able to aspartylate not only its cognate tRNA(Asp) but also tRNA(Asn). Reaction proceeds in two steps: L-aspartate is first activated by ATP to form Asp-AMP and then transferred to the acceptor end of tRNA(Asp/Asn). This chain is Aspartate--tRNA(Asp/Asn) ligase, found in Francisella tularensis subsp. holarctica (strain FTNF002-00 / FTA).